The chain runs to 420 residues: Tyrosine--tRNA ligase (420 aa).

Tyr-38 lines the L-tyrosine pocket. The 'HIGH' region motif lies at 43-52 (PTGDSLHIGH). L-tyrosine contacts are provided by Tyr-169 and Gln-173. The short motif at 231–235 (KFGKS) is the 'KMSKS' region element. Position 234 (Lys-234) interacts with ATP. The S4 RNA-binding domain occupies 353–419 (KNIVDFLVDT…GKRKYTLVTI (67 aa)).

It belongs to the class-I aminoacyl-tRNA synthetase family. TyrS type 1 subfamily. In terms of assembly, homodimer.

The protein resides in the cytoplasm. The catalysed reaction is tRNA(Tyr) + L-tyrosine + ATP = L-tyrosyl-tRNA(Tyr) + AMP + diphosphate + H(+). Catalyzes the attachment of tyrosine to tRNA(Tyr) in a two-step reaction: tyrosine is first activated by ATP to form Tyr-AMP and then transferred to the acceptor end of tRNA(Tyr). The chain is Tyrosine--tRNA ligase from Lactobacillus acidophilus (strain ATCC 700396 / NCK56 / N2 / NCFM).